A 443-amino-acid chain; its full sequence is Methyl-coenzyme M reductase I subunit beta (443 aa).

Tyr-367 is a coenzyme M binding site. Gly-369 contacts coenzyme B.

Belongs to the methyl-coenzyme M reductase beta subunit family. MCR is a hexamer of two alpha, two beta, and two gamma chains, forming a dimer of heterotrimers. It depends on coenzyme F430 as a cofactor.

Its subcellular location is the cytoplasm. The catalysed reaction is coenzyme B + methyl-coenzyme M = methane + coenzyme M-coenzyme B heterodisulfide. It participates in one-carbon metabolism; methyl-coenzyme M reduction; methane from methyl-coenzyme M: step 1/1. With respect to regulation, methyl-coenzyme M reductase activity is inhibited by 3-nitrooxypropanol (3-NOP) in vitro and in vivo, by oxidation of its active site Ni(I), which stops both growth and methanogenesis. Is also inhibited by the reaction product CoM-S-S-CoB. Its function is as follows. Component of the methyl-coenzyme M reductase (MCR) I that catalyzes the reductive cleavage of methyl-coenzyme M (CoM-S-CH3 or 2-(methylthio)ethanesulfonate) using coenzyme B (CoB or 7-mercaptoheptanoylthreonine phosphate) as reductant which results in the production of methane and the mixed heterodisulfide of CoB and CoM (CoM-S-S-CoB). This is the final step in methanogenesis. Neither N-6-mercaptohexanoylthreonine phosphate (H-S-HxoTP) nor N-8-mercaptooctanoylthreonine phosphate (H-SOcoTP) nor any other thiol compound such as CoA or CoM can substitute for CoB as the electron donor. This Methanothermobacter marburgensis (strain ATCC BAA-927 / DSM 2133 / JCM 14651 / NBRC 100331 / OCM 82 / Marburg) (Methanobacterium thermoautotrophicum) protein is Methyl-coenzyme M reductase I subunit beta (mcrB).